Reading from the N-terminus, the 256-residue chain is MRHPLVMGNWKLNGSIHMVHELIAALRKEISGVAGCDVAIAPPTVYLCQARHEIGGSRIALGAQDTGVNLSGAFTGETSPEMLKNVDVKYVIIGHSERRTYHKESDEFIAQKFGVLKELGLTPVLCIGETEAENEAGKTQEVCARQIDAILNAHGAQAFKDAVIAYEPIWAIGTGKSATPAQAQAVHKFIRDHIAKQDAAIAEQVIIQYGGSVNDKNAAELFSQPDIDGALVGGASLKADAFAVIVKAAAEAKAKK.

9 to 11 (NWK) provides a ligand contact to substrate. Catalysis depends on histidine 95, which acts as the Electrophile. Glutamate 167 serves as the catalytic Proton acceptor. Substrate contacts are provided by residues glycine 173, serine 212, and 233–234 (GG).

This sequence belongs to the triosephosphate isomerase family. As to quaternary structure, homodimer.

The protein localises to the cytoplasm. It catalyses the reaction D-glyceraldehyde 3-phosphate = dihydroxyacetone phosphate. It functions in the pathway carbohydrate biosynthesis; gluconeogenesis. The protein operates within carbohydrate degradation; glycolysis; D-glyceraldehyde 3-phosphate from glycerone phosphate: step 1/1. In terms of biological role, involved in the gluconeogenesis. Catalyzes stereospecifically the conversion of dihydroxyacetone phosphate (DHAP) to D-glyceraldehyde-3-phosphate (G3P). This is Triosephosphate isomerase from Proteus mirabilis (strain HI4320).